Consider the following 765-residue polypeptide: Leucine-rich repeat and calponin homology domain-containing protein 2 (765 aa).

Disordered stretches follow at residues 1–39 and 55–76; these read MAAS…GGGG and LFGQ…PQHT. 9 LRR repeats span residues 89-110, 112-133, 135-156, 158-179, 180-201, 203-224, 226-248, 249-269, and 271-292; these read SSGI…GYDL, DTTQ…VWLF, PLET…IKNL, MLTY…LFDL, PLKV…IGKL, DLME…MGKL, SLRE…GDLP, LVKL…YRKL, and HLQV…ICLK. Residues 316 to 401 are disordered; sequence LDLPSLSKRM…GSKTDSQKDQ (86 aa). The span at 378-388 shows a compositional bias: basic and acidic residues; sequence SNREQTSRNDS. A coiled-coil region spans residues 438-472; that stretch reads SEKSRKNEELGDEKRLEKEQLLAEEEDDDLKEVTD. Disordered regions lie at residues 498–552 and 565–628; these read RNKP…QSEE and KYKS…EYGA. Positions 503-512 are enriched in basic and acidic residues; sequence QTVECEKSVS. Polar residues-rich tracts occupy residues 518 to 529 and 584 to 595; these read SPLSPLTWQPLE and DNANMSTQSPVS. The Calponin-homology (CH) domain occupies 642–755; it reads LREEREQIRQ…VTVQALLELP (114 aa).

In terms of biological role, may play a role in the organization of the cytoskeleton. The chain is Leucine-rich repeat and calponin homology domain-containing protein 2 (LRCH2) from Homo sapiens (Human).